The chain runs to 278 residues: Digeranylgeranylglyceryl phosphate synthase (278 aa).

The next 7 helical transmembrane spans lie at 12–32, 34–54, 92–112, 129–149, 199–219, 221–241, and 257–277; these read LKNC…ASNF, FGAL…CGFG, IMIF…MAVL, IIGN…GGIA, IYIS…PYLT, IFGI…LAGF, and SKNI…GSIF.

Belongs to the UbiA prenyltransferase family. DGGGP synthase subfamily. It depends on Mg(2+) as a cofactor.

It is found in the cell membrane. The enzyme catalyses sn-3-O-(geranylgeranyl)glycerol 1-phosphate + (2E,6E,10E)-geranylgeranyl diphosphate = 2,3-bis-O-(geranylgeranyl)-sn-glycerol 1-phosphate + diphosphate. The protein operates within membrane lipid metabolism; glycerophospholipid metabolism. Its function is as follows. Prenyltransferase that catalyzes the transfer of the geranylgeranyl moiety of geranylgeranyl diphosphate (GGPP) to the C2 hydroxyl of (S)-3-O-geranylgeranylglyceryl phosphate (GGGP). This reaction is the second ether-bond-formation step in the biosynthesis of archaeal membrane lipids. This is Digeranylgeranylglyceryl phosphate synthase from Methanococcus vannielii (strain ATCC 35089 / DSM 1224 / JCM 13029 / OCM 148 / SB).